The primary structure comprises 424 residues: Serine hydroxymethyltransferase (424 aa).

(6S)-5,6,7,8-tetrahydrofolate-binding positions include L118 and 122-124 (GHL). An N6-(pyridoxal phosphate)lysine modification is found at K227. (6S)-5,6,7,8-tetrahydrofolate contacts are provided by residues E243 and 351 to 353 (SPF).

This sequence belongs to the SHMT family. As to quaternary structure, homodimer. It depends on pyridoxal 5'-phosphate as a cofactor.

The protein localises to the cytoplasm. It carries out the reaction (6R)-5,10-methylene-5,6,7,8-tetrahydrofolate + glycine + H2O = (6S)-5,6,7,8-tetrahydrofolate + L-serine. Its pathway is one-carbon metabolism; tetrahydrofolate interconversion. The protein operates within amino-acid biosynthesis; glycine biosynthesis; glycine from L-serine: step 1/1. Catalyzes the reversible interconversion of serine and glycine with tetrahydrofolate (THF) serving as the one-carbon carrier. This reaction serves as the major source of one-carbon groups required for the biosynthesis of purines, thymidylate, methionine, and other important biomolecules. Also exhibits THF-independent aldolase activity toward beta-hydroxyamino acids, producing glycine and aldehydes, via a retro-aldol mechanism. The protein is Serine hydroxymethyltransferase of Thermosipho africanus (strain TCF52B).